A 332-amino-acid polypeptide reads, in one-letter code: Fructose-1,6-bisphosphatase class 1 (332 aa).

Residues Glu94, Asp116, Leu118, and Asp119 each contribute to the Mg(2+) site. Substrate-binding positions include 119–122 (DGSS), Asn211, Tyr239, 257–259 (YLY), and Lys269. Mg(2+) is bound at residue Glu275.

This sequence belongs to the FBPase class 1 family. In terms of assembly, homotetramer. It depends on Mg(2+) as a cofactor.

The protein resides in the cytoplasm. It carries out the reaction beta-D-fructose 1,6-bisphosphate + H2O = beta-D-fructose 6-phosphate + phosphate. It participates in carbohydrate biosynthesis; Calvin cycle. The protein is Fructose-1,6-bisphosphatase class 1 of Synechococcus sp. (strain JA-2-3B'a(2-13)) (Cyanobacteria bacterium Yellowstone B-Prime).